Consider the following 193-residue polypeptide: Putative nucleotidase YqfW (193 aa).

Belongs to the 5'(3')-deoxyribonucleotidase family.

This chain is Putative nucleotidase YqfW (yqfW), found in Bacillus subtilis (strain 168).